The chain runs to 889 residues: Alanine--tRNA ligase (889 aa).

Zn(2+) contacts are provided by His587, His591, Cys691, and His695. Disordered stretches follow at residues 734-760 and 866-889; these read QQEQESKRKAEEAVAKEQLEKQREENK and AQGGGKDTSKKDEAISKAKSMILG. Residues 872–881 show a composition bias toward basic and acidic residues; the sequence is DTSKKDEAIS.

Belongs to the class-II aminoacyl-tRNA synthetase family. Zn(2+) is required as a cofactor.

The protein resides in the cytoplasm. It carries out the reaction tRNA(Ala) + L-alanine + ATP = L-alanyl-tRNA(Ala) + AMP + diphosphate. In terms of biological role, catalyzes the attachment of alanine to tRNA(Ala) in a two-step reaction: alanine is first activated by ATP to form Ala-AMP and then transferred to the acceptor end of tRNA(Ala). Also edits incorrectly charged Ser-tRNA(Ala) and Gly-tRNA(Ala) via its editing domain. The chain is Alanine--tRNA ligase from Nitrosopumilus maritimus (strain SCM1).